Consider the following 87-residue polypeptide: Small ribosomal subunit protein bS16 (87 aa).

It belongs to the bacterial ribosomal protein bS16 family.

The polypeptide is Small ribosomal subunit protein bS16 (Ehrlichia ruminantium (strain Gardel)).